Here is a 335-residue protein sequence, read N- to C-terminus: Lipase chaperone (335 aa).

The helical transmembrane segment at 7–23 (LLPLAIALGLGFFIARP) threads the bilayer.

This sequence belongs to the lipase chaperone family.

The protein resides in the cell inner membrane. In terms of biological role, may be involved in the folding of the extracellular lipase during its passage through the periplasm. The sequence is that of Lipase chaperone (lifO) from Ectopseudomonas mendocina (Pseudomonas mendocina).